The primary structure comprises 319 residues: Cytochrome f (319 aa).

Positions 1 to 34 (MQNRNTYDLKKKMTRLISVLVMIHIITRTSISNA) are cleaved as a signal peptide. Heme is bound by residues Tyr35, Cys55, Cys58, and His59. The chain crosses the membrane as a helical span at residues 285–304 (VKGLLLFLASVILAQIFLVL).

This sequence belongs to the cytochrome f family. As to quaternary structure, the 4 large subunits of the cytochrome b6-f complex are cytochrome b6, subunit IV (17 kDa polypeptide, petD), cytochrome f and the Rieske protein, while the 4 small subunits are PetG, PetL, PetM and PetN. The complex functions as a dimer. It depends on heme as a cofactor.

It is found in the plastid. The protein localises to the chloroplast thylakoid membrane. Its function is as follows. Component of the cytochrome b6-f complex, which mediates electron transfer between photosystem II (PSII) and photosystem I (PSI), cyclic electron flow around PSI, and state transitions. This Picea abies (Norway spruce) protein is Cytochrome f (petA).